The primary structure comprises 96 residues: Aspartyl/glutamyl-tRNA(Asn/Gln) amidotransferase subunit C (96 aa).

It belongs to the GatC family. As to quaternary structure, heterotrimer of A, B and C subunits.

It catalyses the reaction L-glutamyl-tRNA(Gln) + L-glutamine + ATP + H2O = L-glutaminyl-tRNA(Gln) + L-glutamate + ADP + phosphate + H(+). The enzyme catalyses L-aspartyl-tRNA(Asn) + L-glutamine + ATP + H2O = L-asparaginyl-tRNA(Asn) + L-glutamate + ADP + phosphate + 2 H(+). Allows the formation of correctly charged Asn-tRNA(Asn) or Gln-tRNA(Gln) through the transamidation of misacylated Asp-tRNA(Asn) or Glu-tRNA(Gln) in organisms which lack either or both of asparaginyl-tRNA or glutaminyl-tRNA synthetases. The reaction takes place in the presence of glutamine and ATP through an activated phospho-Asp-tRNA(Asn) or phospho-Glu-tRNA(Gln). The polypeptide is Aspartyl/glutamyl-tRNA(Asn/Gln) amidotransferase subunit C (Geobacillus kaustophilus (strain HTA426)).